The following is a 190-amino-acid chain: Holliday junction branch migration complex subunit RuvA (190 aa).

The tract at residues 1–64 (MIGRITGTLI…EDAQLLYGFG (64 aa)) is domain I. The tract at residues 65–137 (SSAERSTFRE…MRGKLGADIG (73 aa)) is domain II. A flexible linker region spans residues 137-141 (GATPH). The domain III stretch occupies residues 142-190 (AAGGHQSDILNALLALGYSDKESQAALKKLPEGVDVSEGIRLALKALVR).

This sequence belongs to the RuvA family. Homotetramer. Forms an RuvA(8)-RuvB(12)-Holliday junction (HJ) complex. HJ DNA is sandwiched between 2 RuvA tetramers; dsDNA enters through RuvA and exits via RuvB. An RuvB hexamer assembles on each DNA strand where it exits the tetramer. Each RuvB hexamer is contacted by two RuvA subunits (via domain III) on 2 adjacent RuvB subunits; this complex drives branch migration. In the full resolvosome a probable DNA-RuvA(4)-RuvB(12)-RuvC(2) complex forms which resolves the HJ.

The protein resides in the cytoplasm. Its function is as follows. The RuvA-RuvB-RuvC complex processes Holliday junction (HJ) DNA during genetic recombination and DNA repair, while the RuvA-RuvB complex plays an important role in the rescue of blocked DNA replication forks via replication fork reversal (RFR). RuvA specifically binds to HJ cruciform DNA, conferring on it an open structure. The RuvB hexamer acts as an ATP-dependent pump, pulling dsDNA into and through the RuvAB complex. HJ branch migration allows RuvC to scan DNA until it finds its consensus sequence, where it cleaves and resolves the cruciform DNA. The protein is Holliday junction branch migration complex subunit RuvA of Bordetella parapertussis (strain 12822 / ATCC BAA-587 / NCTC 13253).